Here is a 505-residue protein sequence, read N- to C-terminus: Ikaros family zinc finger protein (505 aa).

C2H2-type zinc fingers lie at residues 18–40 (LTCEICGMVCIGPNVLMVHKRSH), 46–68 (FQCNQCGASFTQKGNLLRHVKLH), 74–96 (FKCSLCSYACRRRDALMGHIRTH), and 102–128 (YKCNFCSRSYKQRSSLEEHQERCPGFH). Composition is skewed to polar residues over residues 262–273 (FLNTPSPVTRSA) and 309–327 (RFQHDSPLSTSRSGLSQQP). Disordered stretches follow at residues 262–296 (FLNTPSPVTRSAGQALEATRRLESESPGLPSDIGS) and 309–440 (RFQH…VSGS). The span at 336–345 (ILGGSLGGIC) shows a compositional bias: gly residues. The span at 366 to 377 (ATSSPSNSCPDS) shows a compositional bias: polar residues. The segment covering 393–406 (GSGSSTSRPNGSTG) has biased composition (low complexity). Residues 409–419 (HRPEMHQDNGR) show a composition bias toward basic and acidic residues. Positions 424-439 (SGASDSSSLPTYNVSG) are enriched in polar residues. C2H2-type zinc fingers lie at residues 448-470 (YPCHHCGLLFLDHVMYTLHMGCH) and 476-500 (FECNVCGYRSRDRYEFSSHIIRGEH).

It belongs to the Ikaros C2H2-type zinc-finger protein family. As to quaternary structure, heterodimer and homodimer with other IKAROS family members. Expression is strongest in the blood, gills and intestine.

The protein resides in the nucleus. This Myxine glutinosa (Atlantic hagfish) protein is Ikaros family zinc finger protein.